We begin with the raw amino-acid sequence, 542 residues long: Zinc finger protein 280A (542 aa).

A disordered region spans residues 66-185; that stretch reads VTPGSNSRRK…RDSKRVKLRD (120 aa). Polar residues predominate over residues 107 to 122; the sequence is EGRSTDSPVTMKSSSE. Residues 128–143 are compositionally biased toward low complexity; the sequence is SSPQVVSPSSSDSLPP. Residues 161-185 are compositionally biased toward basic and acidic residues; it reads SSPDSKRLSTSDINSRDSKRVKLRD. C2H2-type zinc fingers lie at residues 334–357, 364–387, 423–445, and 451–474; these read TTCQHCHRQFPTPFQLQCHIDSVH, AVCKICELSFETDQVLLQHMKDHH, LLCLFCLKLFKTAIPYMNHCWRH, and LQCSKCRLQFLTLKEEIEHKTKDH. The span at 499 to 520 shows a compositional bias: polar residues; that stretch reads QPGSSGMASVIVSNTDPQSSPV. Positions 499–542 are disordered; that stretch reads QPGSSGMASVIVSNTDPQSSPVKTKKKTAMNTRDSRLPCSKDSS.

Its subcellular location is the nucleus. Functionally, may function as a transcription factor. The protein is Zinc finger protein 280A (ZNF280A) of Homo sapiens (Human).